The sequence spans 143 residues: Large ribosomal subunit protein eL28z (143 aa).

It belongs to the eukaryotic ribosomal protein eL28 family. In terms of assembly, component of the large ribosomal subunit. Expressed in seedlings, roots, stems, leaves, inflorescences and siliques.

It is found in the cytoplasm. The protein resides in the nucleus. The protein localises to the nucleolus. Its subcellular location is the nucleoplasm. In terms of biological role, component of the large ribosomal subunit. Essential in leaf polarity establishment, probably having a role for translation in leaf dorsoventral patterning to specify leaf adaxial identity. The chain is Large ribosomal subunit protein eL28z from Arabidopsis thaliana (Mouse-ear cress).